The following is a 1218-amino-acid chain: Coatomer subunit alpha-3 (1218 aa).

WD repeat units lie at residues 7–48, 49–88, 91–132, 133–172, 202–241, 246–285, 288–326, 363–404, and 450–489; these read TKSN…DRFD, EHDG…CLFT, GHLD…AVLT, GHNH…KKTV, GHDR…AWEV, GHMN…GIQT, REHD…PAFS, SLNQ…AGRT, and PLPI…GELQ. The segment at 854-893 is disordered; it reads AMANGGDGFDAEEGEANEEDGEEGGWDLEDLELPPEAETP. A compositionally biased stretch (acidic residues) spans 862–888; sequence FDAEEGEANEEDGEEGGWDLEDLELPP.

In terms of assembly, oligomeric complex that consists of at least the alpha, beta, beta', gamma, delta, epsilon and zeta subunits.

Its subcellular location is the cytoplasm. It localises to the golgi apparatus membrane. The protein localises to the cytoplasmic vesicle. It is found in the COPI-coated vesicle membrane. Functionally, the coatomer is a cytosolic protein complex that binds to dilysine motifs and reversibly associates with Golgi non-clathrin-coated vesicles, which further mediate biosynthetic protein transport from the ER, via the Golgi up to the trans Golgi network. Coatomer complex is required for budding from Golgi membranes, and is essential for the retrograde Golgi-to-ER transport of dilysine-tagged proteins. This is Coatomer subunit alpha-3 from Oryza sativa subsp. japonica (Rice).